The sequence spans 562 residues: Glutamine--tRNA ligase (562 aa).

Residues 35-45 (PEPNGYLHIGH) carry the 'HIGH' region motif. ATP contacts are provided by residues 36 to 38 (EPN) and 42 to 48 (HIGHAKS). 2 residues coordinate L-glutamine: Asp68 and Tyr213. ATP contacts are provided by residues Thr232 and 264–265 (RL). Residues 271–275 (ITSKR) carry the 'KMSKS' region motif.

This sequence belongs to the class-I aminoacyl-tRNA synthetase family. In terms of assembly, monomer.

It localises to the cytoplasm. It carries out the reaction tRNA(Gln) + L-glutamine + ATP = L-glutaminyl-tRNA(Gln) + AMP + diphosphate. In Neisseria meningitidis serogroup A / serotype 4A (strain DSM 15465 / Z2491), this protein is Glutamine--tRNA ligase.